Consider the following 234-residue polypeptide: 1-(5-phosphoribosyl)-5-[(5-phosphoribosylamino)methylideneamino] imidazole-4-carboxamide isomerase (234 aa).

Asp8 acts as the Proton acceptor in catalysis. Asp128 acts as the Proton donor in catalysis.

This sequence belongs to the HisA/HisF family.

The protein resides in the cytoplasm. The catalysed reaction is 1-(5-phospho-beta-D-ribosyl)-5-[(5-phospho-beta-D-ribosylamino)methylideneamino]imidazole-4-carboxamide = 5-[(5-phospho-1-deoxy-D-ribulos-1-ylimino)methylamino]-1-(5-phospho-beta-D-ribosyl)imidazole-4-carboxamide. It functions in the pathway amino-acid biosynthesis; L-histidine biosynthesis; L-histidine from 5-phospho-alpha-D-ribose 1-diphosphate: step 4/9. This Cenarchaeum symbiosum (strain A) protein is 1-(5-phosphoribosyl)-5-[(5-phosphoribosylamino)methylideneamino] imidazole-4-carboxamide isomerase.